We begin with the raw amino-acid sequence, 90 residues long: Small ribosomal subunit protein uS15 (90 aa).

Belongs to the universal ribosomal protein uS15 family. As to quaternary structure, part of the 30S ribosomal subunit. Forms a bridge to the 50S subunit in the 70S ribosome, contacting the 23S rRNA.

Functionally, one of the primary rRNA binding proteins, it binds directly to 16S rRNA where it helps nucleate assembly of the platform of the 30S subunit by binding and bridging several RNA helices of the 16S rRNA. In terms of biological role, forms an intersubunit bridge (bridge B4) with the 23S rRNA of the 50S subunit in the ribosome. This chain is Small ribosomal subunit protein uS15, found in Mycoplasmoides gallisepticum (strain R(low / passage 15 / clone 2)) (Mycoplasma gallisepticum).